The chain runs to 105 residues: Large ribosomal subunit protein uL23 (105 aa).

Belongs to the universal ribosomal protein uL23 family. As to quaternary structure, part of the 50S ribosomal subunit. Contacts protein L29, and trigger factor when it is bound to the ribosome.

One of the early assembly proteins it binds 23S rRNA. One of the proteins that surrounds the polypeptide exit tunnel on the outside of the ribosome. Forms the main docking site for trigger factor binding to the ribosome. This is Large ribosomal subunit protein uL23 from Herminiimonas arsenicoxydans.